The following is a 106-amino-acid chain: Tripartite terminase subunit 2 (106 aa).

The protein belongs to the herpesviridae TRM2 protein family. As to quaternary structure, associates with TRM1 and TRM3 to form the tripartite terminase complex.

The protein resides in the host nucleus. In terms of biological role, component of the molecular motor that translocates viral genomic DNA in empty capsid during DNA packaging. Forms a tripartite terminase complex together with TRM1 and TRM3 in the host cytoplasm. Once the complex reaches the host nucleus, it interacts with the capsid portal vertex. This portal forms a ring in which genomic DNA is translocated into the capsid. This is Tripartite terminase subunit 2 from Homo sapiens (Human).